Here is a 147-residue protein sequence, read N- to C-terminus: Large ribosomal subunit protein bL9 (147 aa).

It belongs to the bacterial ribosomal protein bL9 family.

Functionally, binds to the 23S rRNA. The protein is Large ribosomal subunit protein bL9 of Caldanaerobacter subterraneus subsp. tengcongensis (strain DSM 15242 / JCM 11007 / NBRC 100824 / MB4) (Thermoanaerobacter tengcongensis).